The chain runs to 246 residues: DNA repair protein RecO (246 aa).

This sequence belongs to the RecO family.

In terms of biological role, involved in DNA repair and RecF pathway recombination. The protein is DNA repair protein RecO of Cutibacterium acnes (strain DSM 16379 / KPA171202) (Propionibacterium acnes).